A 224-amino-acid polypeptide reads, in one-letter code: SNEKLFSCSVCGKCFALKTELTIHCRSHSGEKAFHCTECGKYFQHRSNLRRHQRYHTGDKPFTCFECGTCFVNYSWLMLHIRMHTGERPFSCSECGKRFARRSVLEAHQKIHTGERPFSCSECGKGFIKQCDLARHYRTHTGEKPFPCPECGKCFTQSMQLIRHRRTHTGEKPFACSECGKCFAQNSHLTQHRLGHTGEKPFSCSECGKCFSRRSHLIAHLKSH.

8 C2H2-type zinc fingers span residues 6 to 28 (FSCS…CRSH), 34 to 56 (FHCT…QRYH), 62 to 84 (FTCF…IRMH), 90 to 112 (FSCS…QKIH), 118 to 140 (FSCS…YRTH), 146 to 168 (FPCP…RRTH), 174 to 196 (FACS…RLGH), and 202 to 224 (FSCS…LKSH).

The protein belongs to the krueppel C2H2-type zinc-finger protein family.

The protein localises to the nucleus. In terms of biological role, may be involved in transcriptional regulation. This Xenopus laevis (African clawed frog) protein is Oocyte zinc finger protein XlCOF6.1.